The primary structure comprises 1274 residues: DENN domain-containing protein 3 (1274 aa).

Residues 65-108 (GQVPGASCALGKGRRRSFRKKREKPRMEPWKSHPGDSKGPDSED) are disordered. The 171-residue stretch at 75-245 (GKGRRRSFRK…LIPSPPPGPL (171 aa)) folds into the uDENN domain. Over residues 76 to 88 (KGRRRSFRKKREK) the composition is skewed to basic residues. The segment covering 89-105 (PRMEPWKSHPGDSKGPD) has biased composition (basic and acidic residues). The 133-residue stretch at 268–400 (IVDLDLHLPL…PLLLAQTFIQ (133 aa)) folds into the cDENN domain. One can recognise a dDENN domain in the interval 402–506 (VQSLQLHPDL…KARLNGRMDA (105 aa)). Residues 520-970 (RIDRMLISPR…KHKINPSAGE (451 aa)) are linker. Phosphoserine; by ULK1 is present on residues S554 and S572. Y940 carries the post-translational modification Phosphotyrosine. WD repeat units follow at residues 975–1013 (AIEV…VFDA), 1019–1055 (HQHC…IINV), 1059–1099 (SCNK…AWNV), 1103–1140 (RVIS…TPQG), 1146–1181 (LKHP…MWSL), 1186–1228 (QPPQ…IYVM), and 1234–1273 (TVEK…IWKV).

In terms of assembly, forms oligomers. Interacts with 6 of the 7 known isoforms of 14-3-3 proteins.

The protein localises to the cytoplasm. Functionally, guanine nucleotide exchange factor (GEF) activating Rab12. Promotes the exchange of GDP to GTP, converting inactive GDP-bound Rab12 into its active GTP-bound form. Regulates autophagy in response to starvation through Rab12 activation. Starvation leads to ULK1/2-dependent phosphorylation of Ser-554 and Ser-572, which in turn allows recruitment of 14-3-3 adapter proteins and leads to up-regulation of GEF activity towards Rab12. Also plays a role in protein transport from recycling endosomes to lysosomes, regulating, for instance, the degradation of the transferrin receptor and of the amino acid transporter PAT4. Starvation also induces phosphorylation at Tyr-940, which leads to up-regulated GEF activity and initiates autophagy. This is DENN domain-containing protein 3 (Dennd3) from Mus musculus (Mouse).